A 315-amino-acid polypeptide reads, in one-letter code: Tetraacyldisaccharide 4'-kinase (315 aa).

52-59 (TVGGTGKT) serves as a coordination point for ATP.

This sequence belongs to the LpxK family.

It catalyses the reaction a lipid A disaccharide + ATP = a lipid IVA + ADP + H(+). It participates in glycolipid biosynthesis; lipid IV(A) biosynthesis; lipid IV(A) from (3R)-3-hydroxytetradecanoyl-[acyl-carrier-protein] and UDP-N-acetyl-alpha-D-glucosamine: step 6/6. Transfers the gamma-phosphate of ATP to the 4'-position of a tetraacyldisaccharide 1-phosphate intermediate (termed DS-1-P) to form tetraacyldisaccharide 1,4'-bis-phosphate (lipid IVA). This is Tetraacyldisaccharide 4'-kinase from Ruthia magnifica subsp. Calyptogena magnifica.